The sequence spans 189 residues: MLEAKMVMVVPTIEDQAMIVLHPKILSQSVVMHIKGQNYQLDLVKVKHIMIEVGHLDPQVRTGAMVLIKGITAYVKSIRKTVHNVHNYGFLKSHFKRAKTAAKPTLTKLHLTSATRLQKMKKSRIKDSRRMKQLETNFKRKIIEIHEIAVLPIEPMKIKGTTEIERAILRRFRKVPRVGITSVGTRGNY.

This is an uncharacterized protein from Saccharomyces cerevisiae (strain ATCC 204508 / S288c) (Baker's yeast).